The following is a 311-amino-acid chain: Hevamine-A (311 aa).

Residues 1–26 form the signal peptide; sequence MAKRTQAILLLLLAISLIMSSSHVDG. In terms of domain architecture, GH18 spans 27-302; that stretch reads GGIAIYWGQN…SSILDSVLFL (276 aa). 2 disulfides stabilise this stretch: Cys-46–Cys-93 and Cys-76–Cys-83. Glu-153 functions as the Proton donor in the catalytic mechanism. The cysteines at positions 185 and 214 are disulfide-linked. A propeptide spans 300–311 (removed in mature form); sequence LFLHSEECMTVL.

The protein belongs to the glycosyl hydrolase 18 family. Chitinase class II subfamily.

The protein localises to the vacuole. The catalysed reaction is Random endo-hydrolysis of N-acetyl-beta-D-glucosaminide (1-&gt;4)-beta-linkages in chitin and chitodextrins.. It carries out the reaction Hydrolysis of (1-&gt;4)-beta-linkages between N-acetylmuramic acid and N-acetyl-D-glucosamine residues in a peptidoglycan and between N-acetyl-D-glucosamine residues in chitodextrins.. In terms of biological role, bifunctional enzyme with lysozyme / chitinase activity. May have a role in plugging the latex vessel and cessation of latex flow. The polypeptide is Hevamine-A (Hevea brasiliensis (Para rubber tree)).